The chain runs to 476 residues: MMAKWMSVAQVKEKIKESSAEEVTSRYLEVIKKSKINGYLTISDKALEQAKKIDKEGHEGPLAGVPIAIKDNISVVGLPNSCGSKILEGYVPPFNAHVIEKLLSAGAVILGKTNMDEFAMGSSTETSHFGPTANPWDLERVPGGSSGGSAAVVAAGEAPFALGSDTGGSVRCPASFCGVVGLKPTYGAVSRYGVVAYANSLEQVGPLANNVEDIAVLMDVIAGYDRRDSTSIDSKTEYQKALVDDVKGLKIGVPKEFFGEGIHPDVEKAVWDAIHKCESLGATWEEVSMPHIKYALASYYIIAMSEASSNLARFDGTRYGFRAGGENWHAMVSKTRAEGFGTEVKRRILLGTYALSAGYHDKYYLKALKVRTLVKQDFDKALSKVDLLMAPTMPNPAFKIGEKIEDPLTLYLSDINTCPINLAGVPSISVPCGFTDGLPIGLQIMGKPFDEETVLRAAYTFEKNTDYHTKRPPEVA.

Active-site charge relay system residues include Lys70 and Ser145. Ser169 functions as the Acyl-ester intermediate in the catalytic mechanism.

This sequence belongs to the amidase family. GatA subfamily. Heterotrimer of A, B and C subunits.

The enzyme catalyses L-glutamyl-tRNA(Gln) + L-glutamine + ATP + H2O = L-glutaminyl-tRNA(Gln) + L-glutamate + ADP + phosphate + H(+). Functionally, allows the formation of correctly charged Gln-tRNA(Gln) through the transamidation of misacylated Glu-tRNA(Gln) in organisms which lack glutaminyl-tRNA synthetase. The reaction takes place in the presence of glutamine and ATP through an activated gamma-phospho-Glu-tRNA(Gln). This is Glutamyl-tRNA(Gln) amidotransferase subunit A from Methanosarcina mazei (strain ATCC BAA-159 / DSM 3647 / Goe1 / Go1 / JCM 11833 / OCM 88) (Methanosarcina frisia).